The sequence spans 151 residues: Transcriptional repressor NrdR (151 aa).

A zinc finger spans residues 3–34; the sequence is CPKCGSLNDKVLETRQSKEGVVIKRRRECLNC. The ATP-cone domain occupies 49–139; the sequence is IEVIKKNNTV…VFDGFEDIKD (91 aa).

It belongs to the NrdR family. Zn(2+) serves as cofactor.

Negatively regulates transcription of bacterial ribonucleotide reductase nrd genes and operons by binding to NrdR-boxes. This Sulfurihydrogenibium sp. (strain YO3AOP1) protein is Transcriptional repressor NrdR.